Consider the following 481-residue polypeptide: 2-methylisoborneol synthase (481 aa).

2 disordered regions span residues 1–125 and 139–160; these read MPDS…PVGP and QAAVPPDAVPAPSGPSAEGPVV. Over residues 11-23 the composition is skewed to pro residues; the sequence is TSLPEQPPAPPAT. Residues 24 to 33 are compositionally biased toward low complexity; the sequence is APDAPAATVT. 2 stretches are compositionally biased toward pro residues: residues 52–64 and 71–104; these read VTRPSSPPSPSMP and SSPPSSSMPPASWAPPSPLSPPAPSLPPTSPPAT. Positions 105–114 are enriched in low complexity; that stretch reads APETSAATGS. Mg(2+) is bound by residues aspartate 238, aspartate 239, glutamate 243, asparagine 386, serine 390, and glutamate 394.

The protein belongs to the terpene synthase family. 2-methylisoborneol synthase subfamily. The cofactor is Mg(2+).

It carries out the reaction (E)-2-methylgeranyl diphosphate + H2O = 2-methylisoborneol + diphosphate. Catalyzes the cyclization of 2-methylgeranyl diphosphate (2-MeGPP) to 2-methylisoborneol (2-MIB), which likely involves the intermediacy of 2-methyllinalyl diphosphate. This Streptomyces lasalocidi (Streptomyces lasaliensis) protein is 2-methylisoborneol synthase (tpc).